The following is a 264-amino-acid chain: 3-methyl-2-oxobutanoate hydroxymethyltransferase (264 aa).

2 residues coordinate Mg(2+): aspartate 45 and aspartate 84. 3-methyl-2-oxobutanoate contacts are provided by residues 45–46, aspartate 84, and lysine 112; that span reads DS. Residue glutamate 114 coordinates Mg(2+). Glutamate 181 functions as the Proton acceptor in the catalytic mechanism.

It belongs to the PanB family. In terms of assembly, homodecamer; pentamer of dimers. The cofactor is Mg(2+).

The protein resides in the cytoplasm. It catalyses the reaction 3-methyl-2-oxobutanoate + (6R)-5,10-methylene-5,6,7,8-tetrahydrofolate + H2O = 2-dehydropantoate + (6S)-5,6,7,8-tetrahydrofolate. It functions in the pathway cofactor biosynthesis; (R)-pantothenate biosynthesis; (R)-pantoate from 3-methyl-2-oxobutanoate: step 1/2. Catalyzes the reversible reaction in which hydroxymethyl group from 5,10-methylenetetrahydrofolate is transferred onto alpha-ketoisovalerate to form ketopantoate. In Vibrio cholerae serotype O1 (strain ATCC 39541 / Classical Ogawa 395 / O395), this protein is 3-methyl-2-oxobutanoate hydroxymethyltransferase.